Reading from the N-terminus, the 256-residue chain is POU domain class 2-associating factor 1 (256 aa).

The interval 1–24 (MLWQKSTAPEQAPAPPRPYQGVRV) is disordered. In terms of domain architecture, OCA spans 16 to 38 (PRPYQGVRVKEPVKELLRRKRGH).

This sequence belongs to the POU2AF family. As to quaternary structure, interacts with POU2F1/OCT1 and POU2F2/OCT2; the interaction increases POU2F1 and POU2F2 transactivation activity. In terms of processing, ubiquitinated; mediated by SIAH1 or SIAH2 and leading to its subsequent proteasomal degradation. As to expression, B-cell specific.

It localises to the nucleus. Its function is as follows. Transcriptional coactivator that specifically associates with either POU2F1/OCT1 or POU2F2/OCT2. It boosts the POU2F1/OCT1 mediated promoter activity and to a lesser extent, that of POU2F2/OCT2. It recognizes the POU domains of POU2F1/OCT1 and POU2F2/OCT2. It is essential for the response of B-cells to antigens and required for the formation of germinal centers. Regulates IL6 expression in B cells as POU2F2/OCT2 coactivator. This Mus musculus (Mouse) protein is POU domain class 2-associating factor 1.